Here is a 401-residue protein sequence, read N- to C-terminus: F-box protein At2g43440 (401 aa).

The region spanning 7–53 is the F-box domain; that stretch reads NTNSIYIVPELLEDIFLRLPLKSILKFKTVSRQWRSILESKLFVERR.

In Arabidopsis thaliana (Mouse-ear cress), this protein is F-box protein At2g43440.